Reading from the N-terminus, the 471-residue chain is ATP synthase subunit beta (471 aa).

153-160 contributes to the ATP binding site; it reads GGAGVGKT.

This sequence belongs to the ATPase alpha/beta chains family. As to quaternary structure, F-type ATPases have 2 components, CF(1) - the catalytic core - and CF(0) - the membrane proton channel. CF(1) has five subunits: alpha(3), beta(3), gamma(1), delta(1), epsilon(1). CF(0) has four main subunits: a(1), b(1), b'(1) and c(9-12).

Its subcellular location is the cell membrane. The catalysed reaction is ATP + H2O + 4 H(+)(in) = ADP + phosphate + 5 H(+)(out). Its function is as follows. Produces ATP from ADP in the presence of a proton gradient across the membrane. The catalytic sites are hosted primarily by the beta subunits. In Roseiflexus castenholzii (strain DSM 13941 / HLO8), this protein is ATP synthase subunit beta.